The primary structure comprises 315 residues: Cytochrome f (315 aa).

The N-terminal stretch at 1 to 36 (MKQSLLSVLTKKSLRLLAALFLVVTSVFSLPQAAQA) is a signal peptide. Heme-binding residues include phenylalanine 37, cysteine 57, cysteine 60, and histidine 61. Residues 281-301 (IKWLMVFFSAIMISQTLLVLK) traverse the membrane as a helical segment.

It belongs to the cytochrome f family. In terms of assembly, the 4 large subunits of the cytochrome b6-f complex are cytochrome b6, subunit IV (17 kDa polypeptide, PetD), cytochrome f and the Rieske protein, while the 4 small subunits are PetG, PetL, PetM and PetN. The complex functions as a dimer. The cofactor is heme.

Its subcellular location is the cellular thylakoid membrane. Component of the cytochrome b6-f complex, which mediates electron transfer between photosystem II (PSII) and photosystem I (PSI), cyclic electron flow around PSI, and state transitions. This is Cytochrome f from Acaryochloris marina (strain MBIC 11017).